A 232-amino-acid polypeptide reads, in one-letter code: tRNA (guanine-N(1)-)-methyltransferase (232 aa).

S-adenosyl-L-methionine-binding positions include glycine 108 and isoleucine 128–methionine 133.

It belongs to the RNA methyltransferase TrmD family. As to quaternary structure, homodimer.

Its subcellular location is the cytoplasm. The catalysed reaction is guanosine(37) in tRNA + S-adenosyl-L-methionine = N(1)-methylguanosine(37) in tRNA + S-adenosyl-L-homocysteine + H(+). In terms of biological role, specifically methylates guanosine-37 in various tRNAs. This is tRNA (guanine-N(1)-)-methyltransferase from Campylobacter fetus subsp. fetus (strain 82-40).